We begin with the raw amino-acid sequence, 328 residues long: Phosphate acyltransferase (328 aa).

The protein belongs to the PlsX family. Homodimer. Probably interacts with PlsY.

The protein localises to the cytoplasm. The catalysed reaction is a fatty acyl-[ACP] + phosphate = an acyl phosphate + holo-[ACP]. Its pathway is lipid metabolism; phospholipid metabolism. Catalyzes the reversible formation of acyl-phosphate (acyl-PO(4)) from acyl-[acyl-carrier-protein] (acyl-ACP). This enzyme utilizes acyl-ACP as fatty acyl donor, but not acyl-CoA. This chain is Phosphate acyltransferase, found in Staphylococcus haemolyticus (strain JCSC1435).